A 530-amino-acid polypeptide reads, in one-letter code: Structure-specific endonuclease subunit SLX1 homolog 2 (530 aa).

In terms of domain architecture, GIY-YIG spans 4–89 (RFHCVYLLTS…PTKSTRLKTQ (86 aa)). The segment at 232-365 (CALCSLPLRS…PSQPCPCPLC (134 aa)) adopts an SLX1-type zinc-finger fold. Disordered regions lie at residues 276–306 (ATMG…MDAH), 410–438 (NSSL…YCGD), and 474–502 (LPPS…RMTD). Residues 283–298 (RNERSGEYSNKIKDDS) are compositionally biased toward basic and acidic residues.

The protein belongs to the SLX1 family. Forms a heterodimer with a member of the SLX4 family. A divalent metal cation is required as a cofactor.

Its subcellular location is the nucleus. Its function is as follows. Catalytic subunit of a heterodimeric structure-specific endonuclease that resolves DNA secondary structures generated during DNA repair and recombination. Has endonuclease activity towards branched DNA substrates, introducing single-strand cuts in duplex DNA close to junctions with ss-DNA. The protein is Structure-specific endonuclease subunit SLX1 homolog 2 of Trypanosoma cruzi (strain CL Brener).